Reading from the N-terminus, the 255-residue chain is Aquaporin TIP4-1 (255 aa).

A run of 2 helical transmembrane segments spans residues 25-45 (AVLA…SAAM) and 61-81 (TLAA…TAGF). Positions 89–91 (NPA) match the NPA 1 motif. Transmembrane regions (helical) follow at residues 108-128 (VLYV…LRFL), 148-168 (GLVM…AMIL), and 176-196 (AIGP…GGNF). Residues 202-204 (NPA) carry the NPA 2 motif. A helical transmembrane segment spans residues 223 to 243 (WIGPLLGGPLAGFVYESLFLV).

It belongs to the MIP/aquaporin (TC 1.A.8) family. TIP (TC 1.A.8.10) subfamily.

Its subcellular location is the vacuole membrane. Aquaporins facilitate the transport of water and small neutral solutes across cell membranes. The chain is Aquaporin TIP4-1 (TIP4-1) from Zea mays (Maize).